The following is a 398-amino-acid chain: Cholinephosphotransferase 1 (398 aa).

N-acetylalanine is present on alanine 2. Residues 2–62 (AAGAGARPAP…LLQWIPLWMA (61 aa)) lie on the Cytoplasmic side of the membrane. A helical membrane pass occupies residues 63–83 (PNTITLIGLAINLVTTLVLIF). Asparagine 64 provides a ligand contact to CDP-choline. The Lumenal portion of the chain corresponds to 84-93 (YCPTVTEEAP). Residues 94 to 118 (YWTYLLCALGLFIYQSLDAIDGKQA) traverse the membrane as a helical segment. Mg(2+) is bound by residues aspartate 111 and aspartate 114. Position 119 (arginine 119) interacts with CDP-choline. At 119–125 (RRTNSCS) the chain is on the cytoplasmic side. The helical transmembrane segment at 126-150 (PLGELFDHGCDSLSTVFMAIGASIA) threads the bilayer. Position 132 (aspartate 132) interacts with Mg(2+). Residue histidine 133 is the Proton acceptor of the active site. Aspartate 136 is a binding site for Mg(2+). Residues 151 to 160 (VRLGTHPDWL) lie on the Lumenal side of the membrane. The helical transmembrane segment at 161–179 (FFCSFVGMFMFYCAHWQTY) threads the bilayer. Over 180–190 (VSGVLRFGRVD) the chain is Cytoplasmic. A helical transmembrane segment spans residues 191–207 (VTEIQVALVIVFMLSTF). Residues 208–222 (GGATMWDYTIPILEI) are Lumenal-facing. Residues 223-248 (KLKIVPVLGVVGGLIFSCSNYFHVIL) traverse the membrane as a helical segment. The Cytoplasmic segment spans residues 249 to 265 (HGGVGKNGSTIAGTSVL). Residues 266-281 (SPGLHIGLIIILAIMI) traverse the membrane as a helical segment. The Lumenal portion of the chain corresponds to 282 to 293 (YKKSATNMFEKH). Residues 294–316 (PCLYTLMFGCVFAKVAQKLVIAH) traverse the membrane as a helical segment. Topologically, residues 317–329 (MTKSELYLQDTVF) are cytoplasmic. The helical transmembrane segment at 330 to 339 (IGPGLLFLDQ) threads the bilayer. Topologically, residues 340–346 (YFNNFID) are lumenal. A helical membrane pass occupies residues 347–376 (EYVVLWIAMVISSFDMMIYFTSLCLQISRH). Residues 377–398 (LHLNIFKTSCQQAPEQVYKHID) lie on the Cytoplasmic side of the membrane.

The protein belongs to the CDP-alcohol phosphatidyltransferase class-I family. It depends on Mg(2+) as a cofactor. Mn(2+) serves as cofactor. As to expression, expressed in brain, heart, lung, liver, spleen, intestine and muscle. Down-regulated in kidney of type 2 diabetic KK/Ta mice.

The protein localises to the golgi apparatus membrane. The enzyme catalyses CDP-choline + a 1,2-diacyl-sn-glycerol = a 1,2-diacyl-sn-glycero-3-phosphocholine + CMP + H(+). It catalyses the reaction 1-octadecanoyl-2-(5Z,8Z,11Z,14Z-eicosatetraenoyl)-sn-glycerol + CDP-choline = 1-octadecanoyl-2-(5Z,8Z,11Z,14Z-eicosatetraenoyl)-sn-glycero-3-phosphocholine + CMP + H(+). It carries out the reaction 1-hexadecanoyl-2-(9Z-octadecenoyl)-sn-glycerol + CDP-choline = 1-hexadecanoyl-2-(9Z-octadecenoyl)-sn-glycero-3-phosphocholine + CMP + H(+). The catalysed reaction is 1-hexadecanoyl-2-(4Z,7Z,10Z,13Z,16Z,19Z-docosahexaenoyl)-sn-glycerol + CDP-choline = 1-hexadecanoyl-2-(4Z,7Z,10Z,13Z,16Z,19Z-docosahexaenoyl)-sn-glycero-3-phosphocholine + CMP + H(+). The enzyme catalyses 1,2-dioctanoyl-sn-glycerol + CDP-choline = 1,2-dioctanoyl-sn-glycero-3-phosphocholine + CMP + H(+). Its pathway is phospholipid metabolism; phosphatidylcholine biosynthesis; phosphatidylcholine from phosphocholine: step 2/2. Its function is as follows. Catalyzes the final step of de novo phosphatidylcholine (PC) synthesis, i.e. the transfer of choline phosphate from CDP-choline to the free hydroxyl of a diacylglycerol (DAG), producing a PC. It thereby plays a central role in the formation and maintenance of vesicular membranes. The polypeptide is Cholinephosphotransferase 1 (Mus musculus (Mouse)).